A 181-amino-acid polypeptide reads, in one-letter code: Disulfide bond formation protein B (181 aa).

Residues Met1–Ala13 are Cytoplasmic-facing. A helical membrane pass occupies residues Trp14 to Tyr30. The Periplasmic portion of the chain corresponds to Phe31–Met48. Cys40 and Cys43 are oxidised to a cystine. Residues Ala49–Ser64 form a helical membrane-spanning segment. Residues Gly65–Trp71 are Cytoplasmic-facing. The chain crosses the membrane as a helical span at residues Ala72–Tyr89. The Periplasmic segment spans residues Asp90–Gly145. An intrachain disulfide couples Cys105 to Cys131. A helical membrane pass occupies residues Trp146–Cys164. The Cytoplasmic segment spans residues His165–Lys181.

This sequence belongs to the DsbB family.

The protein localises to the cell inner membrane. In terms of biological role, required for disulfide bond formation in some periplasmic proteins. Acts by oxidizing the DsbA protein. The chain is Disulfide bond formation protein B from Idiomarina loihiensis (strain ATCC BAA-735 / DSM 15497 / L2-TR).